The sequence spans 459 residues: FAD-dependent monooxygenase CTB5 (459 aa).

The 178-residue stretch at 10–187 (SDLHPSCIAL…TAVTLKAFEQ (178 aa)) folds into the FAD-binding PCMH-type domain.

This sequence belongs to the oxygen-dependent FAD-linked oxidoreductase family.

It functions in the pathway mycotoxin biosynthesis. Functionally, FAD-dependent monooxygenase; part of the gene cluster that mediates the biosynthesis of cercosporin, a light-activated, non-host-selective toxin. The perylenequinone chromophore of cercosporin absorbs light energy to attain an electronically-activated triplet state and produces active oxygen species such as the hydroxyl radical, superoxide, hydrogen peroxide or singlet oxygen upon reaction with oxygen molecules. These reactive oxygen species cause damage to various cellular components including lipids, proteins and nucleic acids. The first step of cercosporin biosynthesis is performed by the polyketide synthase CTB1 which catalyzes the formation of nor-toralactone. The starter unit acyltransferase (SAT) domain of CTB1 initiates polyketide extension by the selective utilization of acetyl-CoA, which is elongated to the heptaketide in the beta-ketoacyl synthase (KS) domain by successive condensations with six malonyl units introduced by the malonyl acyltransferase (MAT) domain. The product template (PT) domain catalyzes C4-C9 and C2-C11 aldol cyclizations and dehydrations to a trihydroxynaphthalene, which is thought to be delivered to the thioesterase (TE) domain for product release. The bifunctional enzyme CTB3 then methylates nor-toralactone to toralactone before conducting an unusual oxidative aromatic ring opening. The O-methyltransferase CTB2 further methylates the nascent OH-6 of the CBT3 product, blocking further oxidation at this site before the reductase CTB6 reduces the 2-oxopropyl ketone at position C7, giving naphthalene. The FAD-dependent monooxygenase CTB5 in concert with the multicopper oxidase CTB12 are responsible for homodimerization of naphthalene with CTB7 installing the dioxepine moiety, finally producing cercosporin. The fasciclin domain-containing protein CTB11 might act with CTB5 and CTB12 whereas the roles of CTB9 and CTB10 have still to be elucidated. The chain is FAD-dependent monooxygenase CTB5 from Cercospora nicotianae (Barn spot disease fungus).